Reading from the N-terminus, the 285-residue chain is 2-dehydro-3-deoxyphosphooctonate aldolase (285 aa).

This sequence belongs to the KdsA family.

The protein resides in the cytoplasm. It carries out the reaction D-arabinose 5-phosphate + phosphoenolpyruvate + H2O = 3-deoxy-alpha-D-manno-2-octulosonate-8-phosphate + phosphate. It functions in the pathway carbohydrate biosynthesis; 3-deoxy-D-manno-octulosonate biosynthesis; 3-deoxy-D-manno-octulosonate from D-ribulose 5-phosphate: step 2/3. Its pathway is bacterial outer membrane biogenesis; lipopolysaccharide biosynthesis. In Acidovorax ebreus (strain TPSY) (Diaphorobacter sp. (strain TPSY)), this protein is 2-dehydro-3-deoxyphosphooctonate aldolase.